A 582-amino-acid polypeptide reads, in one-letter code: Urocanate reductase (582 aa).

The first 20 residues, 1–20 (MHYKKSIIGIAVTATAIIAG), serve as a signal peptide directing secretion. Cys21 is lipidated: N-palmitoyl cysteine. A lipid anchor (S-diacylglycerol cysteine) is attached at Cys21. An FMN phosphoryl threonine modification is found at Thr93. Residues Ala143, Glu162, Asn170, Ser171, Gly175, Ala176, Ala285, and Asp352 each contribute to the FAD site. The Proton donor role is filled by Arg411. Residues His521, Glu550, and Ala565 each coordinate FAD.

It belongs to the FAD-dependent oxidoreductase 2 family. FRD/SDH subfamily. It depends on FAD as a cofactor. The cofactor is FMN.

The protein resides in the cell membrane. It carries out the reaction dihydrourocanate + A = urocanate + AH2. Its function is as follows. Catalyzes the two-electron reduction of urocanate to dihydrourocanate (also named imidazole propionate or deamino-histidine). The physiological electron donor is unknown; it might be the membrane-bound tetraheme cytochrome c (CymA). Enables anaerobic growth with urocanate as a sole terminal electron acceptor, and thus can provide the cells with a niche where no other bacteria can compete and survive. Is unable to reduce cinnamate and other unsaturated organic acids such as acrylic, crotonic, fumaric and orotic acids. Has no fumarate reductase or succinate dehydrogenase activity. The protein is Urocanate reductase (urdA) of Shewanella oneidensis (strain ATCC 700550 / JCM 31522 / CIP 106686 / LMG 19005 / NCIMB 14063 / MR-1).